The sequence spans 453 residues: MALVRALVCCLLTAWHCRSGLGLPVAPAGGRNPPPAIGQFWHVTDLHLDPTYHITDDHTKVCASSKGANASNPGPFGDVLCDSPYQLILSAFDFIKNSGQEASFMIWTGDSPPHVPVPELSTDTVINVITNMTTTIQSLFPNLQVFPALGNHDYWPQDQLPVVTSKVYNAVANLWKPWLDEEAISTLRKGGFYSQKVTTNPNLRIISLNTNLYYGPNIMTLNKTDPANQFEWLESTLNNSQQNKEKVYIIAHVPVGYLPSSQNITAMREYYNEKLIDIFQKYSDVIAGQFYGHTHRDSIMVLSDKKGSPVNSLFVAPAVTPVKSVLEKQTNNPGIRLFQYDPRDYKLLDMLQYYLNLTEANLKGESIWKLEYILTQTYDIEDLQPESLYGLAKQFTILDSKQFIKYYNYFFVSYDSSVTCDKTCKAFQICAIMNLDNISYADCLKQLYIKHNY.

Residues 1 to 22 (MALVRALVCCLLTAWHCRSGLG) form the signal peptide. Residues Asp45 and His47 each coordinate Zn(2+). An intrachain disulfide couples Cys62 to Cys81. Asn69 carries an N-linked (GlcNAc...) asparagine glycan. Asp110 lines the Zn(2+) pocket. His114 is an ATP binding site. The N-linked (GlcNAc...) asparagine glycan is linked to Asn131. Asn151 provides a ligand contact to Zn(2+). ATP-binding residues include Asn151 and His152. Residues Asn222 and Asn238 are each glycosylated (N-linked (GlcNAc...) asparagine). His252 contacts Zn(2+). Asn263 is a glycosylation site (N-linked (GlcNAc...) asparagine). Zn(2+) is bound by residues His293 and His295. N-linked (GlcNAc...) asparagine glycosylation occurs at Asn356. Intrachain disulfides connect Cys420–Cys424 and Cys430–Cys443. Asn437 carries N-linked (GlcNAc...) asparagine glycosylation.

Belongs to the acid sphingomyelinase family. Monomer. Homodimer; homodimerizes following 2',3'-cGAMP-binding. The cofactor is Zn(2+). N-glycosylation is required for protein maturation, secretion and phosphodiesterase activity. In terms of tissue distribution, detected in blood serum. Detected in macrophages (at protein level).

The protein resides in the secreted. It catalyses the reaction 2',3'-cGAMP + H2O = 5'-pGpA(2'-5') + H(+). It carries out the reaction 5'-pGpA(2'-5') + H2O = 5'-GpA(2'-5') + phosphate. The catalysed reaction is a ribonucleoside 5'-triphosphate + H2O = a ribonucleoside 5'-diphosphate + phosphate + H(+). The enzyme catalyses ATP + H2O = ADP + phosphate + H(+). Requires micromolar levels of Zn(2+) for activity. Inhibited by millimolar levels of Zn(2+). Its function is as follows. Cyclic-nucleotide phosphodiesterase that acts as a negative regulator of innate immunity by mediating degradation of 2',3'-cGAMP, thereby inhibiting the cGAS-STING signaling. Specifically linearizes 2',3'-cGAMP into 2'5'-bond pGpA and further hydrolyzes pGpA to produce GpA. Also has in vitro nucleotide phosphodiesterase activity with nucleoside triphosphates, such as ATP. Has in vitro activity with p-nitrophenyl-TMP. Has lower activity with nucleoside diphosphates, and no activity with nucleoside monophosphates. Has in vitro activity with CDP-choline, giving rise to CMP and phosphocholine. Has in vitro activity with CDP-ethanolamine. Does not have sphingomyelin phosphodiesterase activity. The polypeptide is Cyclic GMP-AMP phosphodiesterase SMPDL3A (Homo sapiens (Human)).